The following is a 711-amino-acid chain: DNA topoisomerase 3 (711 aa).

The Toprim domain occupies 2-135; that stretch reads KSLILAEKPS…IKRLWISSVT (134 aa). Residues Glu-8 and Asp-104 each contribute to the Mg(2+) site. A Topo IA-type catalytic domain is found at 152-580; that stretch reads YQNLYEAALA…EMKNFTFKVV (429 aa). The tract at residues 186 to 191 is interaction with DNA; it reads SLGRVQ. Tyr-305 acts as the O-(5'-phospho-DNA)-tyrosine intermediate in catalysis.

The protein belongs to the type IA topoisomerase family. The cofactor is Mg(2+).

It catalyses the reaction ATP-independent breakage of single-stranded DNA, followed by passage and rejoining.. In terms of biological role, releases the supercoiling and torsional tension of DNA, which is introduced during the DNA replication and transcription, by transiently cleaving and rejoining one strand of the DNA duplex. Introduces a single-strand break via transesterification at a target site in duplex DNA. The scissile phosphodiester is attacked by the catalytic tyrosine of the enzyme, resulting in the formation of a DNA-(5'-phosphotyrosyl)-enzyme intermediate and the expulsion of a 3'-OH DNA strand. The free DNA strand then undergoes passage around the unbroken strand, thus removing DNA supercoils. Finally, in the religation step, the DNA 3'-OH attacks the covalent intermediate to expel the active-site tyrosine and restore the DNA phosphodiester backbone. In Staphylococcus epidermidis (strain ATCC 12228 / FDA PCI 1200), this protein is DNA topoisomerase 3.